Here is an 82-residue protein sequence, read N- to C-terminus: Small ribosomal subunit protein uS17 (82 aa).

Belongs to the universal ribosomal protein uS17 family. As to quaternary structure, part of the 30S ribosomal subunit.

In terms of biological role, one of the primary rRNA binding proteins, it binds specifically to the 5'-end of 16S ribosomal RNA. The polypeptide is Small ribosomal subunit protein uS17 (Paracoccus denitrificans (strain Pd 1222)).